Consider the following 807-residue polypeptide: Probable dimethyl sulfoxide reductase chain YnfF (807 aa).

Residues 1-45 constitute a signal peptide (tat-type signal); that stretch reads MKIHTTEALMKAEISRRSLMKTSALGSLALASSAFTLPFSQMVRA. A 4Fe-4S Mo/W bis-MGD-type domain is found at 52–113; sequence EKAVWSSCTV…SIRRRMNHPD (62 aa). Residues cysteine 59, cysteine 63, cysteine 67, and cysteine 99 each contribute to the [4Fe-4S] cluster site. Serine 195 provides a ligand contact to Mo-bis(molybdopterin guanine dinucleotide).

It belongs to the prokaryotic molybdopterin-containing oxidoreductase family. As to quaternary structure, the complex consists of three subunits: YnfF, the reductase; YnfG, an electron transfer protein, and YnfH, a membrane anchor protein. It depends on [4Fe-4S] cluster as a cofactor. Mo-bis(molybdopterin guanine dinucleotide) is required as a cofactor. Post-translationally, exported by the Tat system. The position of the signal peptide cleavage has not been experimentally proven. Can also be exported by the Sec system.

It localises to the cell membrane. Terminal reductase during anaerobic growth on various sulfoxide and N-oxide compounds. In Escherichia coli (strain K12), this protein is Probable dimethyl sulfoxide reductase chain YnfF (ynfF).